Reading from the N-terminus, the 749-residue chain is Protein phosphatase 1E (749 aa).

Positions 21–128 are disordered; that stretch reads EFRGPCGGGE…PPLPPLPRPL (108 aa). Repeat copies occupy residues 31–32, 33–34, and 35–36. Residues 31-44 are 7 X 2 AA tandem repeats of P-E; sequence PEPEPESEPEPEPE. Residues 31–45 are compositionally biased toward acidic residues; the sequence is PEPEPESEPEPEPEA. A 4; approximate repeat occupies 37 to 38; sequence SE. 3 tandem repeats follow at residues 39–40, 41–42, and 43–44. Positions 46–55 are enriched in low complexity; it reads ELVAAEAAEA. Residues 69 to 102 show a composition bias toward acidic residues; sequence ATEEGEQDQDPEPEDEAVEEETATEGEEEEEEEA. The span at 110–126 shows a compositional bias: pro residues; the sequence is VPPPPQPQLPPLPPLPR. A PPM-type phosphatase domain is found at 224–485; it reads QIYYETSIHA…DNITVIVVFL (262 aa). Mn(2+)-binding residues include aspartate 270, glycine 271, aspartate 432, and aspartate 476. The disordered stretch occupies residues 495-537; it reads SEESEWTENSFQGGQEDGGDDKETHGECKRPWPQHQCSAPADL. A compositionally biased stretch (basic and acidic residues) spans 515-524; sequence DKETHGECKR. 2 positions are modified to phosphoserine: serine 532 and serine 545. The segment at 608 to 627 is disordered; the sequence is VKSSLPERSGAGEPRVSFNL.

The protein belongs to the PP2C family. In terms of assembly, heterotrimer. Interacts with PAX1 and ARHGEF6 (or ARHGEF7). Mg(2+) serves as cofactor. Requires Mn(2+) as cofactor.

It is found in the nucleus. The protein resides in the cytoplasm. It catalyses the reaction O-phospho-L-seryl-[protein] + H2O = L-seryl-[protein] + phosphate. The enzyme catalyses O-phospho-L-threonyl-[protein] + H2O = L-threonyl-[protein] + phosphate. Its function is as follows. Protein phosphatase that inactivates multifunctional CaM kinases such as CAMK4 and CAMK2. Dephosphorylates and inactivates PAK. May play a role in the inhibition of actin fiber stress breakdown and in morphological changes driven by TNK2/CDC42. Dephosphorylates PRKAA2. The chain is Protein phosphatase 1E (Ppm1e) from Mus musculus (Mouse).